Here is a 451-residue protein sequence, read N- to C-terminus: POU domain, class 3, transcription factor 1 (451 aa).

Disordered stretches follow at residues 1–21 (MATT…GTGP), 69–114 (AHPQ…GFHA), 127–154 (AWAQ…HQPQ), 186–253 (GLHH…PSSD), and 395–451 (KRMT…GSVQ). Composition is skewed to gly residues over residues 11-20 (GPGGGAGGTG), 76-85 (TGGGGGGDWA), and 95-112 (AGGG…GGGF). The segment covering 190–199 (ALHEDGHEAQ) has biased composition (basic and acidic residues). Positions 220 to 232 (AGGLHAAAAHLHP) are enriched in low complexity. In terms of domain architecture, POU-specific spans 247 to 321 (EDAPSSDDLE…LLNKWLEETD (75 aa)). The segment at residues 339-398 (KRKKRTSIEVGVKGALESHFLKCPKPSAHEITGLADSLQLEKEVVRVWFCNRRQKEKRMT) is a DNA-binding region (homeobox). Over residues 427 to 436 (PSAPPPPPPA) the composition is skewed to pro residues.

The protein belongs to the POU transcription factor family. Class-3 subfamily. Expressed in embryonal stem cells and in the developing brain.

The protein resides in the nucleus. Its function is as follows. Transcription factor that binds to the octamer motif (5'-ATTTGCAT-3'). Acts as a transcriptional activator when binding cooperatively with SOX4, SOX11, or SOX12 to gene promoters. Acts as a transcriptional repressor of myelin-specific genes. This Homo sapiens (Human) protein is POU domain, class 3, transcription factor 1 (POU3F1).